A 348-amino-acid polypeptide reads, in one-letter code: D-alanine--D-alanine ligase (348 aa).

One can recognise an ATP-grasp domain in the interval 132–334; that stretch reads KRVLESIGIP…YPDLIEELVT (203 aa). 162–217 is an ATP binding site; sequence LARLTFPIFVKPANMGSSVGISKAQTKVELRKAIQLALTYDSRVLIEQGVIAREIE. Residues aspartate 288, glutamate 301, and asparagine 303 each contribute to the Mg(2+) site.

It belongs to the D-alanine--D-alanine ligase family. Mg(2+) serves as cofactor. It depends on Mn(2+) as a cofactor.

It localises to the cytoplasm. It catalyses the reaction 2 D-alanine + ATP = D-alanyl-D-alanine + ADP + phosphate + H(+). It participates in cell wall biogenesis; peptidoglycan biosynthesis. In terms of biological role, cell wall formation. The protein is D-alanine--D-alanine ligase of Streptococcus pyogenes serotype M4 (strain MGAS10750).